The chain runs to 98 residues: NADH-ubiquinone oxidoreductase chain 4L (98 aa).

A run of 3 helical transmembrane segments spans residues 1–21 (MSVVYINIFLAFILSFMGLLV), 30–50 (LLCLEGMMLSLFVMMTITVLT), and 61–81 (IILLVFAACEAALGLSLLVMI).

The protein belongs to the complex I subunit 4L family. As to quaternary structure, core subunit of respiratory chain NADH dehydrogenase (Complex I) which is composed of 45 different subunits.

The protein localises to the mitochondrion inner membrane. The catalysed reaction is a ubiquinone + NADH + 5 H(+)(in) = a ubiquinol + NAD(+) + 4 H(+)(out). Core subunit of the mitochondrial membrane respiratory chain NADH dehydrogenase (Complex I) which catalyzes electron transfer from NADH through the respiratory chain, using ubiquinone as an electron acceptor. Part of the enzyme membrane arm which is embedded in the lipid bilayer and involved in proton translocation. The sequence is that of NADH-ubiquinone oxidoreductase chain 4L (MT-ND4L) from Lontra canadensis (North American river otter).